The chain runs to 287 residues: Small ribosomal subunit biogenesis GTPase RsgA (287 aa).

Positions 61–218 constitute a CP-type G domain; the sequence is ISQLKRPAVA…MVDTPGFSSL (158 aa). GTP contacts are provided by residues 110–113 and 161–169; these read NKLD and GPSGVGKST. Residues cysteine 242, cysteine 247, histidine 249, and cysteine 255 each coordinate Zn(2+).

The protein belongs to the TRAFAC class YlqF/YawG GTPase family. RsgA subfamily. As to quaternary structure, monomer. Associates with 30S ribosomal subunit, binds 16S rRNA. It depends on Zn(2+) as a cofactor.

Its subcellular location is the cytoplasm. In terms of biological role, one of several proteins that assist in the late maturation steps of the functional core of the 30S ribosomal subunit. Helps release RbfA from mature subunits. May play a role in the assembly of ribosomal proteins into the subunit. Circularly permuted GTPase that catalyzes slow GTP hydrolysis, GTPase activity is stimulated by the 30S ribosomal subunit. The polypeptide is Small ribosomal subunit biogenesis GTPase RsgA (Clostridium kluyveri (strain NBRC 12016)).